We begin with the raw amino-acid sequence, 268 residues long: Small ribosomal subunit protein uS3 (268 aa).

The 69-residue stretch at 39-107 folds into the KH type-2 domain; sequence VREYLKKKLK…PVHVNIEEIR (69 aa). Residues 216 to 268 form a disordered region; sequence VEEVAEEKRPRRNARPGGDRRPRRDGEGGGPAGARRGAPRRAGGAGGDGKTGE. Residues 232–242 show a composition bias toward basic and acidic residues; that stretch reads GGDRRPRRDGE. A compositionally biased stretch (low complexity) spans 248–257; it reads GARRGAPRRA. The span at 258–268 shows a compositional bias: gly residues; that stretch reads GGAGGDGKTGE.

It belongs to the universal ribosomal protein uS3 family. In terms of assembly, part of the 30S ribosomal subunit. Forms a tight complex with proteins S10 and S14.

Functionally, binds the lower part of the 30S subunit head. Binds mRNA in the 70S ribosome, positioning it for translation. The polypeptide is Small ribosomal subunit protein uS3 (Paraburkholderia phytofirmans (strain DSM 17436 / LMG 22146 / PsJN) (Burkholderia phytofirmans)).